Consider the following 141-residue polypeptide: MEMLQGLLLLLLLSMGGAWASREPLRPRCRPINATLAVEKEGCPVCITVNTTICAGYCPTMMRVLQGVLPPLPQVVCTYRDVRFESIXLPGCPRGVDPMVSFPVALSCRCGPCHRSTSDCGGPNDHPLTCDHPQLSGLLFL.

A signal peptide spans 1 to 20 (MEMLQGLLLLLLLSMGGAWA). 6 disulfides stabilise this stretch: C29–C77, C43–C92, C46–C130, C54–C108, C58–C110, and C113–C120. N33 and N50 each carry an N-linked (GlcNAc...) asparagine glycan.

It belongs to the glycoprotein hormones subunit beta family. In terms of assembly, heterodimer of a common alpha chain and a unique beta chain which confers biological specificity to thyrotropin, lutropin, follitropin and gonadotropin.

The protein resides in the secreted. Its function is as follows. Promotes spermatogenesis and ovulation by stimulating the testes and ovaries to synthesize steroids. The protein is Lutropin subunit beta (LHB) of Gorilla gorilla gorilla (Western lowland gorilla).